The primary structure comprises 132 residues: MARPEWVTYSDEEIEEMILKFNKEGKSTSEIGIILRDQYGIPSVKEVTGERITQILKRNDQAGKYPEDLMNLIKRAVNIRDHLAENPKDLHSKRGLTIIESRIRRLASYYVNEGALPEGWRYNPKEAALLVK.

This sequence belongs to the universal ribosomal protein uS15 family. As to quaternary structure, part of the 30S ribosomal subunit.

This is Small ribosomal subunit protein uS15 from Methanobrevibacter smithii (strain ATCC 35061 / DSM 861 / OCM 144 / PS).